The chain runs to 341 residues: L-threonine 3-dehydrogenase (341 aa).

Cys-38 is a Zn(2+) binding site. Active-site charge relay system residues include Thr-40 and His-43. The Zn(2+) site is built by His-63, Glu-64, Cys-93, Cys-96, Cys-99, and Cys-107. NAD(+)-binding positions include Ile-175, Asp-195, Arg-200, 262–264 (LGI), and 286–287 (IY).

Belongs to the zinc-containing alcohol dehydrogenase family. In terms of assembly, homotetramer. Zn(2+) is required as a cofactor.

Its subcellular location is the cytoplasm. It catalyses the reaction L-threonine + NAD(+) = (2S)-2-amino-3-oxobutanoate + NADH + H(+). It functions in the pathway amino-acid degradation; L-threonine degradation via oxydo-reductase pathway; glycine from L-threonine: step 1/2. Catalyzes the NAD(+)-dependent oxidation of L-threonine to 2-amino-3-ketobutyrate. This chain is L-threonine 3-dehydrogenase, found in Escherichia coli O17:K52:H18 (strain UMN026 / ExPEC).